The chain runs to 400 residues: Sensory histidine kinase/phosphatase NtrB (400 aa).

Composition is skewed to low complexity over residues 1–10 (MARASAAAPL) and 18–27 (RAPSSSYRPV). The interval 1–27 (MARASAAAPLPRRPARPRAPSSSYRPV) is disordered. Residues 29–99 (PCIDPSVMLN…IEQVQQGRHR (71 aa)) enclose the PAS domain. The Histidine kinase domain occupies 163–381 (MLGHEVKNPL…VFKVSLPMFD (219 aa)). His166 is subject to Phosphohistidine; by autocatalysis.

Autophosphorylated.

The protein localises to the cytoplasm. The enzyme catalyses ATP + protein L-histidine = ADP + protein N-phospho-L-histidine.. Its function is as follows. Member of the two-component regulatory system NtrB/NtrC, which controls expression of the nitrogen-regulated (ntr) genes in response to nitrogen limitation. Under conditions of nitrogen limitation, NtrB autophosphorylates and transfers the phosphoryl group to NtrC. In the presence of nitrogen, acts as a phosphatase that dephosphorylates and inactivates NtrC. This is Sensory histidine kinase/phosphatase NtrB from Azospirillum brasilense.